A 410-amino-acid polypeptide reads, in one-letter code: UDP-N-acetylglucosamine--N-acetylmuramyl-(pentapeptide) pyrophosphoryl-undecaprenol N-acetylglucosamine transferase (410 aa).

Positions 1 to 34 (MKDTVSQPAGGRGATAPRPADAASPSCGSSPSAD) are disordered. Low complexity predominate over residues 14–34 (ATAPRPADAASPSCGSSPSAD). UDP-N-acetyl-alpha-D-glucosamine is bound by residues 45–47 (TAG), Asn167, Arg204, Ser238, and Gln334.

This sequence belongs to the glycosyltransferase 28 family. MurG subfamily.

It is found in the cell membrane. The enzyme catalyses di-trans,octa-cis-undecaprenyl diphospho-N-acetyl-alpha-D-muramoyl-L-alanyl-D-glutamyl-meso-2,6-diaminopimeloyl-D-alanyl-D-alanine + UDP-N-acetyl-alpha-D-glucosamine = di-trans,octa-cis-undecaprenyl diphospho-[N-acetyl-alpha-D-glucosaminyl-(1-&gt;4)]-N-acetyl-alpha-D-muramoyl-L-alanyl-D-glutamyl-meso-2,6-diaminopimeloyl-D-alanyl-D-alanine + UDP + H(+). It participates in cell wall biogenesis; peptidoglycan biosynthesis. Cell wall formation. Catalyzes the transfer of a GlcNAc subunit on undecaprenyl-pyrophosphoryl-MurNAc-pentapeptide (lipid intermediate I) to form undecaprenyl-pyrophosphoryl-MurNAc-(pentapeptide)GlcNAc (lipid intermediate II). The polypeptide is UDP-N-acetylglucosamine--N-acetylmuramyl-(pentapeptide) pyrophosphoryl-undecaprenol N-acetylglucosamine transferase (Mycobacterium bovis (strain ATCC BAA-935 / AF2122/97)).